A 358-amino-acid polypeptide reads, in one-letter code: Tribbles homolog 3 (358 aa).

A disordered region spans residues 1-54 (MRATPLAAPAGSLSRKKRLELDDNLDTERPVQKRARSGPQPRLPPCLLPLSPPT). Residues 1-127 (MRATPLAAPA…KHVARPTEVL (127 aa)) form an interaction with DDIT3/CHOP region. Residue S12 is modified to Phosphoserine. The segment covering 41–54 (PRLPPCLLPLSPPT) has biased composition (pro residues). The region spanning 68-316 (LGPYVLLEPE…TGILLHPWLR (249 aa)) is the Protein kinase domain.

Belongs to the protein kinase superfamily. CAMK Ser/Thr protein kinase family. Tribbles subfamily. In terms of assembly, interacts with AKT1, AKT2, MAP2K1 and MAP2K7. Interacts with ATF4. Interacts with DDIT3/CHOP and inhibits its interaction with EP300/P300. Interacts with APOBEC3C. Interacts (via N-terminus) with APOBEC3A. Interacts with RELA. In terms of tissue distribution, highest expression in liver, pancreas, peripheral blood leukocytes and bone marrow. Also highly expressed in a number of primary lung, colon and breast tumors. Expressed in spleen, thymus, and prostate and is undetectable in other examined tissues, including testis, ovary, small intestine, colon, leukocyte, heart, brain, placenta, lung, skeletal muscle, and kidney.

It is found in the nucleus. Its function is as follows. Inactive protein kinase which acts as a regulator of the integrated stress response (ISR), a process for adaptation to various stress. Inhibits the transcriptional activity of DDIT3/CHOP and is involved in DDIT3/CHOP-dependent cell death during ER stress. May play a role in programmed neuronal cell death but does not appear to affect non-neuronal cells. Acts as a negative feedback regulator of the ATF4-dependent transcription during the ISR: while TRIB3 expression is promoted by ATF4, TRIB3 protein interacts with ATF4 and inhibits ATF4 transcription activity. Disrupts insulin signaling by binding directly to Akt kinases and blocking their activation. May bind directly to and mask the 'Thr-308' phosphorylation site in AKT1. Interacts with the NF-kappa-B transactivator p65 RELA and inhibits its phosphorylation and thus its transcriptional activation activity. Interacts with MAPK kinases and regulates activation of MAP kinases. Can inhibit APOBEC3A editing of nuclear DNA. In Homo sapiens (Human), this protein is Tribbles homolog 3 (TRIB3).